Reading from the N-terminus, the 754-residue chain is Fibronectin type III domain-containing protein 1 (754 aa).

An N-terminal signal peptide occupies residues 1 to 19 (MKSWISISFLCMLFPLSNG). Disordered stretches follow at residues 40–61 (SLQGTAPTSQYPQGGTQISQGG), 85–106 (AQISQGGGQGISQGATQGTQFS), and 130–163 (AQHSQAGAQGSQFPQSAAHTAQHHQGTAQPAQSG). Residues 130–161 (AQHSQAGAQGSQFPQSAAHTAQHHQGTAQPAQ) are compositionally biased toward low complexity. 5 Fibronectin type-III domains span residues 250–355 (PPQS…TPDL), 359–449 (APLN…TDKF), 453–545 (APRN…TKMD), 549–642 (EPMS…LPKP), and 645–742 (LVPN…SFPG). Positions 731-754 (SNLSSQQFSFPGQQVGQQQSNPWI) are disordered.

Prismatic layer of shell (at protein level). Expressed primarily in the mantle with highest level in the outer epithelium of the mantle edge and lower level in the mantle pallium.

Its subcellular location is the secreted. In Margaritifera margaritifera (Freshwater pearl mussel), this protein is Fibronectin type III domain-containing protein 1.